The following is a 187-amino-acid chain: Protein P18, mitochondrial (187 aa).

A mitochondrion-targeting transit peptide spans 1–17 (MRRLSSQLMCTAAAVRF). Residues 160 to 187 (NAAKAKADGKEHPSTLAQQQSLFDIKIQ) are disordered.

Its subcellular location is the mitochondrion inner membrane. Functionally, putative RNA-binding protein. In Leishmania tarentolae (Sauroleishmania tarentolae), this protein is Protein P18, mitochondrial.